The primary structure comprises 247 residues: Probable enoyl-CoA hydratase echA6 (247 aa).

It belongs to the enoyl-CoA hydratase/isomerase family.

The catalysed reaction is a (3S)-3-hydroxyacyl-CoA = a (2E)-enoyl-CoA + H2O. It carries out the reaction a 4-saturated-(3S)-3-hydroxyacyl-CoA = a (3E)-enoyl-CoA + H2O. Could possibly oxidize fatty acids using specific components. The protein is Probable enoyl-CoA hydratase echA6 (echA6) of Mycobacterium leprae (strain TN).